A 66-amino-acid polypeptide reads, in one-letter code: Large ribosomal subunit protein bL31 (66 aa).

The Zn(2+) site is built by C16, C18, C36, and C39.

This sequence belongs to the bacterial ribosomal protein bL31 family. Type A subfamily. Part of the 50S ribosomal subunit. Zn(2+) is required as a cofactor.

Binds the 23S rRNA. The chain is Large ribosomal subunit protein bL31 from Clostridioides difficile (strain 630) (Peptoclostridium difficile).